The chain runs to 609 residues: UvrABC system protein C (609 aa).

In terms of domain architecture, GIY-YIG spans 15–92 (TGSGVYQIQD…IKQFRPRYNV (78 aa)). The region spanning 202–237 (DQVIIKLTERMEVASENLVFEEAAHYRDQIRQLRRL) is the UVR domain.

It belongs to the UvrC family. In terms of assembly, interacts with UvrB in an incision complex.

The protein localises to the cytoplasm. In terms of biological role, the UvrABC repair system catalyzes the recognition and processing of DNA lesions. UvrC both incises the 5' and 3' sides of the lesion. The N-terminal half is responsible for the 3' incision and the C-terminal half is responsible for the 5' incision. This is UvrABC system protein C from Coxiella burnetii (strain Dugway 5J108-111).